Here is a 102-residue protein sequence, read N- to C-terminus: MQSQKIRIRLKAYDHKLLDVSVTEIVDTAKRTGARVAGPIPLPTVINKYCVLRGPHVDKKSRDQFEIRTHKRLIDILDPTQQTVDALMKLDLAAGVDVEIKL.

Belongs to the universal ribosomal protein uS10 family. As to quaternary structure, part of the 30S ribosomal subunit.

Involved in the binding of tRNA to the ribosomes. This is Small ribosomal subunit protein uS10 from Pelobacter propionicus (strain DSM 2379 / NBRC 103807 / OttBd1).